Here is a 332-residue protein sequence, read N- to C-terminus: Transaldolase (332 aa).

The active-site Schiff-base intermediate with substrate is the K135.

This sequence belongs to the transaldolase family. Type 1 subfamily. In terms of assembly, homodimer.

Its subcellular location is the cytoplasm. It catalyses the reaction D-sedoheptulose 7-phosphate + D-glyceraldehyde 3-phosphate = D-erythrose 4-phosphate + beta-D-fructose 6-phosphate. The protein operates within carbohydrate degradation; pentose phosphate pathway; D-glyceraldehyde 3-phosphate and beta-D-fructose 6-phosphate from D-ribose 5-phosphate and D-xylulose 5-phosphate (non-oxidative stage): step 2/3. In terms of biological role, transaldolase is important for the balance of metabolites in the pentose-phosphate pathway. The sequence is that of Transaldolase from Prochlorococcus marinus (strain NATL2A).